The sequence spans 122 residues: Cytochrome c-556 (122 aa).

Heme contacts are provided by M11, C111, C114, and H115. Heme c contacts are provided by M11, C111, C114, and H115.

Monomer. Binds 1 heme c group covalently per subunit.

Functionally, low-spin monoheme cytochrome c. This chain is Cytochrome c-556, found in Agrobacterium tumefaciens (strain II Chrys).